The primary structure comprises 1068 residues: Carbamoyl phosphate synthase large chain (1068 aa).

The interval 1-401 (MPLNKDIKKV…AFLKGTRSLE (401 aa)) is carboxyphosphate synthetic domain. ATP is bound by residues Arg-129, Arg-169, Gly-175, Gly-176, Lys-208, Val-210, Glu-215, Gly-241, Ile-242, His-243, Gln-284, and Glu-298. Residues 133 to 327 (RNVMSRINGP…IAKVASKIAL (195 aa)) form the ATP-grasp 1 domain. Residues Gln-284, Glu-298, and Asn-300 each contribute to the Mg(2+) site. The Mn(2+) site is built by Gln-284, Glu-298, and Asn-300. The segment at 402-549 (IGKYSLEHKK…YSTYDVYDEV (148 aa)) is oligomerization domain. Positions 550-932 (EVSKNKKVIV…ALYKGFIGAN (383 aa)) are carbamoyl phosphate synthetic domain. Residues 674-864 (DELLEKLKIA…IVDIATRVML (191 aa)) form the ATP-grasp 2 domain. ATP is bound by residues Arg-710, Lys-749, Leu-751, Glu-755, Gly-780, Val-781, His-782, Ser-783, Gln-823, and Glu-835. Mg(2+)-binding residues include Gln-823, Glu-835, and Asn-837. Residues Gln-823, Glu-835, and Asn-837 each contribute to the Mn(2+) site. The 136-residue stretch at 933 to 1068 (MSIKKEKGTV…ETLYIFDLSN (136 aa)) folds into the MGS-like domain. The interval 933–1068 (MSIKKEKGTV…ETLYIFDLSN (136 aa)) is allosteric domain.

The protein belongs to the CarB family. As to quaternary structure, composed of two chains; the small (or glutamine) chain promotes the hydrolysis of glutamine to ammonia, which is used by the large (or ammonia) chain to synthesize carbamoyl phosphate. Tetramer of heterodimers (alpha,beta)4. It depends on Mg(2+) as a cofactor. Mn(2+) serves as cofactor.

The catalysed reaction is hydrogencarbonate + L-glutamine + 2 ATP + H2O = carbamoyl phosphate + L-glutamate + 2 ADP + phosphate + 2 H(+). It catalyses the reaction hydrogencarbonate + NH4(+) + 2 ATP = carbamoyl phosphate + 2 ADP + phosphate + 2 H(+). The protein operates within amino-acid biosynthesis; L-arginine biosynthesis; carbamoyl phosphate from bicarbonate: step 1/1. It functions in the pathway pyrimidine metabolism; UMP biosynthesis via de novo pathway; (S)-dihydroorotate from bicarbonate: step 1/3. Functionally, large subunit of the glutamine-dependent carbamoyl phosphate synthetase (CPSase). CPSase catalyzes the formation of carbamoyl phosphate from the ammonia moiety of glutamine, carbonate, and phosphate donated by ATP, constituting the first step of 2 biosynthetic pathways, one leading to arginine and/or urea and the other to pyrimidine nucleotides. The large subunit (synthetase) binds the substrates ammonia (free or transferred from glutamine from the small subunit), hydrogencarbonate and ATP and carries out an ATP-coupled ligase reaction, activating hydrogencarbonate by forming carboxy phosphate which reacts with ammonia to form carbamoyl phosphate. This is Carbamoyl phosphate synthase large chain from Clostridium botulinum (strain Kyoto / Type A2).